Consider the following 434-residue polypeptide: 3-phosphoshikimate 1-carboxyvinyltransferase (434 aa).

Residues lysine 22, serine 23, and arginine 27 each contribute to the 3-phosphoshikimate site. Lysine 22 lines the phosphoenolpyruvate pocket. The phosphoenolpyruvate site is built by glycine 93 and arginine 121. Positions 168, 169, 170, 199, 320, and 347 each coordinate 3-phosphoshikimate. A phosphoenolpyruvate-binding site is contributed by glutamine 170. Aspartate 320 (proton acceptor) is an active-site residue. Arginine 351, arginine 394, and lysine 419 together coordinate phosphoenolpyruvate.

Belongs to the EPSP synthase family. In terms of assembly, monomer.

The protein resides in the cytoplasm. The catalysed reaction is 3-phosphoshikimate + phosphoenolpyruvate = 5-O-(1-carboxyvinyl)-3-phosphoshikimate + phosphate. It participates in metabolic intermediate biosynthesis; chorismate biosynthesis; chorismate from D-erythrose 4-phosphate and phosphoenolpyruvate: step 6/7. Its function is as follows. Catalyzes the transfer of the enolpyruvyl moiety of phosphoenolpyruvate (PEP) to the 5-hydroxyl of shikimate-3-phosphate (S3P) to produce enolpyruvyl shikimate-3-phosphate and inorganic phosphate. This chain is 3-phosphoshikimate 1-carboxyvinyltransferase, found in Burkholderia multivorans (strain ATCC 17616 / 249).